A 264-amino-acid polypeptide reads, in one-letter code: L-aspartate dehydrogenase (264 aa).

Residues Ala-120 and Asn-186 each contribute to the NAD(+) site. Residue His-216 is part of the active site.

It belongs to the L-aspartate dehydrogenase family.

The enzyme catalyses L-aspartate + NADP(+) + H2O = oxaloacetate + NH4(+) + NADPH + H(+). It carries out the reaction L-aspartate + NAD(+) + H2O = oxaloacetate + NH4(+) + NADH + H(+). Its pathway is cofactor biosynthesis; NAD(+) biosynthesis; iminoaspartate from L-aspartate (dehydrogenase route): step 1/1. In terms of biological role, specifically catalyzes the NAD or NADP-dependent dehydrogenation of L-aspartate to iminoaspartate. The chain is L-aspartate dehydrogenase from Serratia proteamaculans (strain 568).